The chain runs to 812 residues: Glycerol-3-phosphate acyltransferase (812 aa).

An HXXXXD motif motif is present at residues 308-313; that stretch reads CHRSHM.

This sequence belongs to the GPAT/DAPAT family.

It is found in the cell inner membrane. The enzyme catalyses sn-glycerol 3-phosphate + an acyl-CoA = a 1-acyl-sn-glycero-3-phosphate + CoA. Its pathway is phospholipid metabolism; CDP-diacylglycerol biosynthesis; CDP-diacylglycerol from sn-glycerol 3-phosphate: step 1/3. The protein is Glycerol-3-phosphate acyltransferase of Pseudoalteromonas translucida (strain TAC 125).